The chain runs to 155 residues: Small ribosomal subunit protein uS7c (155 aa).

It belongs to the universal ribosomal protein uS7 family. In terms of assembly, part of the 30S ribosomal subunit.

It is found in the plastid. It localises to the chloroplast. In terms of biological role, one of the primary rRNA binding proteins, it binds directly to 16S rRNA where it nucleates assembly of the head domain of the 30S subunit. The polypeptide is Small ribosomal subunit protein uS7c (rps7) (Canella winterana (Wild cinnamon)).